A 757-amino-acid chain; its full sequence is Polyribonucleotide nucleotidyltransferase (757 aa).

Mg(2+) is bound by residues Asp487 and Asp493. The KH domain maps to 554–613 (PRITTVRVKPDQIRLIIGPGGKTIKGIVDQTGVAIDVEDDGTVNVASADSDAVKRALDII). The 69-residue stretch at 623–691 (GATYKGTVKR…REGKIRLSRR (69 aa)) folds into the S1 motif domain. The segment at 697 to 757 (PEGEEGDRAR…PPRERRERRS (61 aa)) is disordered. 2 stretches are compositionally biased toward basic and acidic residues: residues 702–711 (GDRARERMAQ) and 719–757 (PRRD…ERRS).

This sequence belongs to the polyribonucleotide nucleotidyltransferase family. Mg(2+) serves as cofactor.

It localises to the cytoplasm. It carries out the reaction RNA(n+1) + phosphate = RNA(n) + a ribonucleoside 5'-diphosphate. Functionally, involved in mRNA degradation. Catalyzes the phosphorolysis of single-stranded polyribonucleotides processively in the 3'- to 5'-direction. This Sorangium cellulosum (strain So ce56) (Polyangium cellulosum (strain So ce56)) protein is Polyribonucleotide nucleotidyltransferase.